The sequence spans 356 residues: Tyrosine recombinase XerS (356 aa).

The region spanning 16–121 (IMPWYVLDYY…ALSSLYKYLT (106 aa)) is the Core-binding (CB) domain. In terms of domain architecture, Tyr recombinase spans 169 to 354 (AFLDYVDKEY…VNDEQKTALD (186 aa)). Residues R210, K234, H306, R309, and H332 contribute to the active site. The active-site O-(3'-phospho-DNA)-tyrosine intermediate is the Y341.

Belongs to the 'phage' integrase family. XerS subfamily.

The protein localises to the cytoplasm. FtsK is required for recombination. Site-specific tyrosine recombinase, which acts by catalyzing the cutting and rejoining of the recombining DNA molecules. Essential to convert dimers of the bacterial chromosome into monomers to permit their segregation at cell division. This is Tyrosine recombinase XerS from Streptococcus pyogenes serotype M12 (strain MGAS9429).